The sequence spans 249 residues: Triosephosphate isomerase (249 aa).

9–11 (NWK) is a substrate binding site. His95 (electrophile) is an active-site residue. The active-site Proton acceptor is the Glu167. Residues Gly173, Ser213, and 234 to 235 (GG) contribute to the substrate site.

It belongs to the triosephosphate isomerase family. Homodimer.

The protein resides in the cytoplasm. It catalyses the reaction D-glyceraldehyde 3-phosphate = dihydroxyacetone phosphate. The protein operates within carbohydrate biosynthesis; gluconeogenesis. It participates in carbohydrate degradation; glycolysis; D-glyceraldehyde 3-phosphate from glycerone phosphate: step 1/1. Its function is as follows. Involved in the gluconeogenesis. Catalyzes stereospecifically the conversion of dihydroxyacetone phosphate (DHAP) to D-glyceraldehyde-3-phosphate (G3P). This chain is Triosephosphate isomerase, found in Dictyoglomus turgidum (strain DSM 6724 / Z-1310).